The following is a 452-amino-acid chain: MSGTRASNDRSSHPGGHKRPRYDVGNKVTVVLGAQWGDEGKGKVVDLLATDSDIICRCQGGNNAGHTVVVEGKEYDFHLFPSGIINPKAISFIGNGVVIHLPGLFEEADKNEKKGLKDWEKRLIISDRAHIVCDFHQAVDGLQEVQRQAQEGKNIGTTKKGIGPTYSSKASRTGLRICDLLSDFDEFSARFKNLAHQHQSMFSNLEVDIDGQLKKLKMYAEKIRPMVRDGVYFMYEALHGSPKKILVEGANAALLDIDFGTYPFVTSSNCTVGGVCTGLGIPPQNIGDVYGVVKTYSTRVGIGAFPTEQINEIGNLLQTRGHEWGVTTGRKRRCGWLDLVILRYAHMINGFTALALTKLDILDVLDEIKVGVAYRLNGKRIPYFPANQEILQKVEVEYEAMPGWKCDTTGARKWEDLPTRAQNYIRFVENHIGVPVKWVGVGKSRESMIELF.

The interval 1–22 is disordered; the sequence is MSGTRASNDRSSHPGGHKRPRY. GTP-binding positions include 37 to 43 and 65 to 67; these read GDEGKGK and GHT. Asp38 serves as the catalytic Proton acceptor. Asp38 and Gly65 together coordinate Mg(2+). Asp38 lines the substrate pocket. Residues 38-41, 63-66, Thr158, Arg172, Asn251, Thr266, and Arg330 contribute to the IMP site; these read DEGK and NAGH. His66 functions as the Proton donor in the catalytic mechanism. Position 326–332 (326–332) interacts with substrate; sequence VTTGRKR. Residues Arg332, 358 to 360, and 440 to 443 each bind GTP; these read KLD and GVGK.

Belongs to the adenylosuccinate synthetase family. In terms of assembly, homodimer. The cofactor is Mg(2+).

The protein localises to the cytoplasm. The catalysed reaction is IMP + L-aspartate + GTP = N(6)-(1,2-dicarboxyethyl)-AMP + GDP + phosphate + 2 H(+). It participates in purine metabolism; AMP biosynthesis via de novo pathway; AMP from IMP: step 1/2. Its function is as follows. Component of the purine nucleotide cycle (PNC), which interconverts IMP and AMP to regulate the nucleotide levels in various tissues, and which contributes to glycolysis and ammoniagenesis. Catalyzes the first committed step in the biosynthesis of AMP from IMP. This chain is Adenylosuccinate synthetase isozyme 1 (adss1), found in Xenopus tropicalis (Western clawed frog).